A 662-amino-acid polypeptide reads, in one-letter code: Chromosomal replication initiator protein DnaA (662 aa).

A domain I, interacts with DnaA modulators region spans residues 1-93 (MDDEQNVLAT…QVEGLGVRIA (93 aa)). The domain II stretch occupies residues 93-322 (AAPATPTAER…STPAPANSSA (230 aa)). Positions 96 to 105 (ATPTAERAAA) are enriched in low complexity. Residues 96–294 (ATPTAERAAA…SDGPVERDDE (199 aa)) are disordered. The span at 114–123 (SRPERPRGER) shows a compositional bias: basic and acidic residues. The segment covering 166-199 (PPAAEYTPAAEYTPAAEYTPAAEYSPEPEYTPAT) has biased composition (low complexity). 2 stretches are compositionally biased toward basic and acidic residues: residues 236–248 (TPRRDGHGPRRDA) and 261–290 (PGDRPLRDTDRPLREPAAGHDVRESDGPVE). The tract at residues 323-539 (SLNAKYTFET…GALIRVTAFA (217 aa)) is domain III, AAA+ region. The ATP site is built by G367, G369, K370, and T371. Positions 540-662 (SLNGQPLDLS…LTARIKQRSR (123 aa)) are domain IV, binds dsDNA.

It belongs to the DnaA family. As to quaternary structure, oligomerizes as a right-handed, spiral filament on DNA at oriC.

It localises to the cytoplasm. Plays an essential role in the initiation and regulation of chromosomal replication. ATP-DnaA binds to the origin of replication (oriC) to initiate formation of the DNA replication initiation complex once per cell cycle. Binds the DnaA box (a 9 base pair repeat at the origin) and separates the double-stranded (ds)DNA. Forms a right-handed helical filament on oriC DNA; dsDNA binds to the exterior of the filament while single-stranded (ss)DNA is stabiized in the filament's interior. The ATP-DnaA-oriC complex binds and stabilizes one strand of the AT-rich DNA unwinding element (DUE), permitting loading of DNA polymerase. After initiation quickly degrades to an ADP-DnaA complex that is not apt for DNA replication. Binds acidic phospholipids. This is Chromosomal replication initiator protein DnaA from Nocardia farcinica (strain IFM 10152).